The sequence spans 311 residues: tRNA-cytidine(32) 2-sulfurtransferase (311 aa).

Residues 47-52 (SGGKDS) carry the PP-loop motif motif. Cys122, Cys125, and Cys213 together coordinate [4Fe-4S] cluster.

This sequence belongs to the TtcA family. As to quaternary structure, homodimer. The cofactor is Mg(2+). [4Fe-4S] cluster serves as cofactor.

Its subcellular location is the cytoplasm. It catalyses the reaction cytidine(32) in tRNA + S-sulfanyl-L-cysteinyl-[cysteine desulfurase] + AH2 + ATP = 2-thiocytidine(32) in tRNA + L-cysteinyl-[cysteine desulfurase] + A + AMP + diphosphate + H(+). It functions in the pathway tRNA modification. Functionally, catalyzes the ATP-dependent 2-thiolation of cytidine in position 32 of tRNA, to form 2-thiocytidine (s(2)C32). The sulfur atoms are provided by the cysteine/cysteine desulfurase (IscS) system. In Salmonella paratyphi A (strain ATCC 9150 / SARB42), this protein is tRNA-cytidine(32) 2-sulfurtransferase.